The chain runs to 322 residues: Probable L-asparaginase (322 aa).

The 315-residue stretch at Pro-6–Gly-320 folds into the Asparaginase/glutaminase domain. The disordered stretch occupies residues Thr-13 to Pro-37. Thr-16 (O-isoaspartyl threonine intermediate) is an active-site residue. Residues Ser-54 and Thr-85–Asp-86 contribute to the substrate site.

Belongs to the asparaginase 1 family.

It is found in the cytoplasm. It catalyses the reaction L-asparagine + H2O = L-aspartate + NH4(+). This Deinococcus radiodurans (strain ATCC 13939 / DSM 20539 / JCM 16871 / CCUG 27074 / LMG 4051 / NBRC 15346 / NCIMB 9279 / VKM B-1422 / R1) protein is Probable L-asparaginase (ansA).